The following is a 495-amino-acid chain: Acetyl-coenzyme A carboxylase carboxyl transferase subunit beta, chloroplastic (495 aa).

Positions 188-208 are disordered; the sequence is SRNSSENEGSSRRTRTKGSDL. Residues 226-495 enclose the CoA carboxyltransferase N-terminal domain; sequence LWVQCENCYG…PLNQKSSKIK (270 aa). Residues Cys-230, Cys-233, Cys-249, and Cys-252 each coordinate Zn(2+). Residues 230-252 form a C4-type zinc finger; the sequence is CENCYGLNYKKFFKSKMNICEQC.

Belongs to the AccD/PCCB family. Acetyl-CoA carboxylase is a heterohexamer composed of biotin carboxyl carrier protein, biotin carboxylase and 2 subunits each of ACCase subunit alpha and ACCase plastid-coded subunit beta (accD). The cofactor is Zn(2+).

The protein localises to the plastid. It is found in the chloroplast stroma. It catalyses the reaction N(6)-carboxybiotinyl-L-lysyl-[protein] + acetyl-CoA = N(6)-biotinyl-L-lysyl-[protein] + malonyl-CoA. It functions in the pathway lipid metabolism; malonyl-CoA biosynthesis; malonyl-CoA from acetyl-CoA: step 1/1. Its function is as follows. Component of the acetyl coenzyme A carboxylase (ACC) complex. Biotin carboxylase (BC) catalyzes the carboxylation of biotin on its carrier protein (BCCP) and then the CO(2) group is transferred by the transcarboxylase to acetyl-CoA to form malonyl-CoA. The protein is Acetyl-coenzyme A carboxylase carboxyl transferase subunit beta, chloroplastic of Nicotiana tomentosiformis (Tobacco).